We begin with the raw amino-acid sequence, 648 residues long: Threonine--tRNA ligase (648 aa).

In terms of domain architecture, TGS spans methionine 1 to threonine 61. Positions aspartate 240–proline 539 are catalytic. Cysteine 335, histidine 386, and histidine 516 together coordinate Zn(2+).

The protein belongs to the class-II aminoacyl-tRNA synthetase family. In terms of assembly, homodimer. Zn(2+) serves as cofactor.

Its subcellular location is the cytoplasm. The catalysed reaction is tRNA(Thr) + L-threonine + ATP = L-threonyl-tRNA(Thr) + AMP + diphosphate + H(+). Catalyzes the attachment of threonine to tRNA(Thr) in a two-step reaction: L-threonine is first activated by ATP to form Thr-AMP and then transferred to the acceptor end of tRNA(Thr). Also edits incorrectly charged L-seryl-tRNA(Thr). This is Threonine--tRNA ligase from Flavobacterium psychrophilum (strain ATCC 49511 / DSM 21280 / CIP 103535 / JIP02/86).